The following is a 205-amino-acid chain: Large ribosomal subunit protein bL17c (205 aa).

The transit peptide at M1–A89 directs the protein to the chloroplast.

It belongs to the bacterial ribosomal protein bL17 family. As to quaternary structure, part of the 50S ribosomal subunit.

Its subcellular location is the plastid. It localises to the chloroplast. Functionally, this protein binds directly to 23S ribosomal RNA. The protein is Large ribosomal subunit protein bL17c (RPL17) of Nicotiana tabacum (Common tobacco).